Reading from the N-terminus, the 209-residue chain is Uracil phosphoribosyltransferase (209 aa).

Residues arginine 79, arginine 104, and 131–139 (DPMLATGGS) each bind 5-phospho-alpha-D-ribose 1-diphosphate. Uracil-binding positions include isoleucine 194 and 199-201 (GDA). Aspartate 200 contacts 5-phospho-alpha-D-ribose 1-diphosphate.

It belongs to the UPRTase family. Mg(2+) is required as a cofactor.

The catalysed reaction is UMP + diphosphate = 5-phospho-alpha-D-ribose 1-diphosphate + uracil. The protein operates within pyrimidine metabolism; UMP biosynthesis via salvage pathway; UMP from uracil: step 1/1. With respect to regulation, allosterically activated by GTP. In terms of biological role, catalyzes the conversion of uracil and 5-phospho-alpha-D-ribose 1-diphosphate (PRPP) to UMP and diphosphate. This chain is Uracil phosphoribosyltransferase, found in Lactobacillus gasseri (strain ATCC 33323 / DSM 20243 / BCRC 14619 / CIP 102991 / JCM 1131 / KCTC 3163 / NCIMB 11718 / NCTC 13722 / AM63).